Reading from the N-terminus, the 508-residue chain is Lysine--tRNA ligase (508 aa).

Residues glutamate 418 and glutamate 425 each contribute to the Mg(2+) site.

This sequence belongs to the class-II aminoacyl-tRNA synthetase family. In terms of assembly, homodimer. Requires Mg(2+) as cofactor.

The protein resides in the cytoplasm. It carries out the reaction tRNA(Lys) + L-lysine + ATP = L-lysyl-tRNA(Lys) + AMP + diphosphate. The protein is Lysine--tRNA ligase of Burkholderia pseudomallei (strain 1710b).